A 185-amino-acid polypeptide reads, in one-letter code: ATP-dependent protease subunit HslV (185 aa).

The active site involves T12. 3 residues coordinate Na(+): A168, C171, and T174.

Belongs to the peptidase T1B family. HslV subfamily. A double ring-shaped homohexamer of HslV is capped on each side by a ring-shaped HslU homohexamer. The assembly of the HslU/HslV complex is dependent on binding of ATP.

Its subcellular location is the cytoplasm. The enzyme catalyses ATP-dependent cleavage of peptide bonds with broad specificity.. Allosterically activated by HslU binding. In terms of biological role, protease subunit of a proteasome-like degradation complex believed to be a general protein degrading machinery. The polypeptide is ATP-dependent protease subunit HslV (Cereibacter sphaeroides (strain ATCC 17029 / ATH 2.4.9) (Rhodobacter sphaeroides)).